A 316-amino-acid polypeptide reads, in one-letter code: UDP-3-O-acylglucosamine N-acyltransferase 2 (316 aa).

The Proton acceptor role is filled by His230.

This sequence belongs to the transferase hexapeptide repeat family. LpxD subfamily. In terms of assembly, homotrimer.

It carries out the reaction a UDP-3-O-[(3R)-3-hydroxyacyl]-alpha-D-glucosamine + a (3R)-hydroxyacyl-[ACP] = a UDP-2-N,3-O-bis[(3R)-3-hydroxyacyl]-alpha-D-glucosamine + holo-[ACP] + H(+). It participates in bacterial outer membrane biogenesis; LPS lipid A biosynthesis. Catalyzes the N-acylation of UDP-3-O-acylglucosamine using 3-hydroxyacyl-ACP as the acyl donor. Is involved in the biosynthesis of lipid A, a phosphorylated glycolipid that anchors the lipopolysaccharide to the outer membrane of the cell. This chain is UDP-3-O-acylglucosamine N-acyltransferase 2, found in Sulfurimonas denitrificans (strain ATCC 33889 / DSM 1251) (Thiomicrospira denitrificans (strain ATCC 33889 / DSM 1251)).